Consider the following 444-residue polypeptide: Killer cell immunoglobulin-like receptor 3DL1 (444 aa).

The N-terminal stretch at 1–21 is a signal peptide; it reads MSLMVVSMACVGLFLVQRAGP. Topologically, residues 22 to 340 are extracellular; the sequence is HMGGQDKPFL…SKSGNPRHLH (319 aa). Ig-like C2-type domains lie at 42–102, 137–202, and 237–300; these read GGHV…HPHS, GERV…VTHT, and GESV…FRHS. Cystine bridges form between cysteine 49/cysteine 95, cysteine 144/cysteine 195, and cysteine 244/cysteine 293. Residues asparagine 92, asparagine 179, and asparagine 273 are each glycosylated (N-linked (GlcNAc...) asparagine). Residues 315 to 334 are disordered; that stretch reads VTGNPSSSWPSPTEPSSKSG. The span at 319-333 shows a compositional bias: low complexity; sequence PSSSWPSPTEPSSKS. The helical transmembrane segment at 341-360 threads the bilayer; it reads ILIGTSVVIILFILLLFFLL. Residues 361–444 lie on the Cytoplasmic side of the membrane; that stretch reads HLWCSNKKNA…KPRSKVVSCP (84 aa). Disordered stretches follow at residues 375-394 and 409-444; these read QEPA…QDPE and RKIT…VSCP.

This sequence belongs to the immunoglobulin superfamily.

It localises to the cell membrane. Functionally, receptor on natural killer (NK) cells for HLA Bw4 allele. Inhibits the activity of NK cells thus preventing cell lysis. The protein is Killer cell immunoglobulin-like receptor 3DL1 of Homo sapiens (Human).